Here is a 98-residue protein sequence, read N- to C-terminus: DNA-binding protein Fis (98 aa).

The segment at residues Q74 to K93 is a DNA-binding region (H-T-H motif).

It belongs to the transcriptional regulatory Fis family. Homodimer.

Its function is as follows. Activates ribosomal RNA transcription. Plays a direct role in upstream activation of rRNA promoters. The chain is DNA-binding protein Fis from Vibrio parahaemolyticus serotype O3:K6 (strain RIMD 2210633).